We begin with the raw amino-acid sequence, 117 residues long: Large ribosomal subunit protein uL18 (117 aa).

Basic residues predominate over residues 1 to 17 (MNLSRNKARKVKQKRLR). The segment at 1 to 23 (MNLSRNKARKVKQKRLRAKSELS) is disordered.

It belongs to the universal ribosomal protein uL18 family. In terms of assembly, part of the 50S ribosomal subunit; part of the 5S rRNA/L5/L18/L25 subcomplex. Contacts the 5S and 23S rRNAs.

Functionally, this is one of the proteins that bind and probably mediate the attachment of the 5S RNA into the large ribosomal subunit, where it forms part of the central protuberance. This Mycoplasmopsis synoviae (strain 53) (Mycoplasma synoviae) protein is Large ribosomal subunit protein uL18.